Consider the following 226-residue polypeptide: Cytidylate kinase (226 aa).

Residue 10–18 (GPASSGKST) participates in ATP binding.

The protein belongs to the cytidylate kinase family. Type 1 subfamily.

Its subcellular location is the cytoplasm. The enzyme catalyses CMP + ATP = CDP + ADP. It carries out the reaction dCMP + ATP = dCDP + ADP. The protein is Cytidylate kinase of Streptococcus uberis (strain ATCC BAA-854 / 0140J).